The sequence spans 386 residues: Ribonucleoside-diphosphate reductase subunit M2 (386 aa).

Polar residues predominate over residues 1-24 (MSSTRSPLKTKNENTISTKMNNMS). Residues 1 to 36 (MSSTRSPLKTKNENTISTKMNNMSFVDKENTPPSLS) form a disordered region. Ser-6 bears the Phosphoserine mark. Phosphothreonine is present on Thr-31. Asp-135, Glu-166, and His-169 together coordinate Fe cation. Tyr-173 is an active-site residue. Residues Glu-229, Glu-263, and His-266 each contribute to the Fe cation site.

The protein belongs to the ribonucleoside diphosphate reductase small chain family. In terms of assembly, heterodimer of a large and a small subunit. It depends on Fe cation as a cofactor.

The protein localises to the cytoplasm. It catalyses the reaction a 2'-deoxyribonucleoside 5'-diphosphate + [thioredoxin]-disulfide + H2O = a ribonucleoside 5'-diphosphate + [thioredoxin]-dithiol. Its function is as follows. Provides the precursors necessary for DNA synthesis. Catalyzes the biosynthesis of deoxyribonucleotides from the corresponding ribonucleotides. This chain is Ribonucleoside-diphosphate reductase subunit M2 (rrm2), found in Danio rerio (Zebrafish).